The following is a 72-amino-acid chain: Cell division protein ZapB (72 aa).

The stretch at 1–71 (MSLEILDQLE…IRSLLGKFDN (71 aa)) forms a coiled coil.

The protein belongs to the ZapB family. As to quaternary structure, homodimer. The ends of the coiled-coil dimer bind to each other, forming polymers. Interacts with FtsZ.

It localises to the cytoplasm. Non-essential, abundant cell division factor that is required for proper Z-ring formation. It is recruited early to the divisome by direct interaction with FtsZ, stimulating Z-ring assembly and thereby promoting cell division earlier in the cell cycle. Its recruitment to the Z-ring requires functional FtsA or ZipA. This chain is Cell division protein ZapB, found in Haemophilus influenzae (strain 86-028NP).